The sequence spans 91 residues: Cell division protein FtsB (91 aa).

Residues M1–F3 are Cytoplasmic-facing. A helical membrane pass occupies residues I4–I21. Over S22 to P91 the chain is Periplasmic. A coiled-coil region spans residues L26–G74.

This sequence belongs to the FtsB family. In terms of assembly, part of a complex composed of FtsB, FtsL and FtsQ.

The protein localises to the cell inner membrane. Essential cell division protein. May link together the upstream cell division proteins, which are predominantly cytoplasmic, with the downstream cell division proteins, which are predominantly periplasmic. The protein is Cell division protein FtsB of Nitrosococcus oceani (strain ATCC 19707 / BCRC 17464 / JCM 30415 / NCIMB 11848 / C-107).